The primary structure comprises 501 residues: Uridine kinase (501 aa).

Ser17 is modified (phosphoserine). 63 to 70 (GASGSGKT) is a binding site for ATP. Ser276 is subject to Phosphoserine.

The protein belongs to the uridine kinase family.

It localises to the cytoplasm. Its subcellular location is the nucleus. It carries out the reaction uridine + ATP = UMP + ADP + H(+). It catalyses the reaction cytidine + ATP = CMP + ADP + H(+). It functions in the pathway pyrimidine metabolism; CTP biosynthesis via salvage pathway; CTP from cytidine: step 1/3. The protein operates within pyrimidine metabolism; UMP biosynthesis via salvage pathway; UMP from uridine: step 1/1. Functionally, catalyzes the conversion of uridine into UMP and cytidine into CMP in the pyrimidine salvage pathway. This is Uridine kinase (URK1) from Saccharomyces cerevisiae (strain ATCC 204508 / S288c) (Baker's yeast).